Consider the following 149-residue polypeptide: D-aminoacyl-tRNA deacylase (149 aa).

The Gly-cisPro motif, important for rejection of L-amino acids signature appears at 137–138; it reads GP.

The protein belongs to the DTD family. Homodimer.

Its subcellular location is the cytoplasm. It catalyses the reaction glycyl-tRNA(Ala) + H2O = tRNA(Ala) + glycine + H(+). It carries out the reaction a D-aminoacyl-tRNA + H2O = a tRNA + a D-alpha-amino acid + H(+). Functionally, an aminoacyl-tRNA editing enzyme that deacylates mischarged D-aminoacyl-tRNAs. Also deacylates mischarged glycyl-tRNA(Ala), protecting cells against glycine mischarging by AlaRS. Acts via tRNA-based rather than protein-based catalysis; rejects L-amino acids rather than detecting D-amino acids in the active site. By recycling D-aminoacyl-tRNA to D-amino acids and free tRNA molecules, this enzyme counteracts the toxicity associated with the formation of D-aminoacyl-tRNA entities in vivo and helps enforce protein L-homochirality. This chain is D-aminoacyl-tRNA deacylase, found in Clostridium tetani (strain Massachusetts / E88).